The following is a 490-amino-acid chain: Protein nucleotidyltransferase YdiU (490 aa).

ATP-binding residues include glycine 94, glycine 96, arginine 97, lysine 117, aspartate 129, glycine 130, arginine 180, and arginine 187. The Proton acceptor role is filled by aspartate 256. Residues asparagine 257 and aspartate 266 each contribute to the Mg(2+) site. Aspartate 266 provides a ligand contact to ATP.

This sequence belongs to the SELO family. Mg(2+) serves as cofactor. Requires Mn(2+) as cofactor.

It catalyses the reaction L-seryl-[protein] + ATP = 3-O-(5'-adenylyl)-L-seryl-[protein] + diphosphate. The enzyme catalyses L-threonyl-[protein] + ATP = 3-O-(5'-adenylyl)-L-threonyl-[protein] + diphosphate. The catalysed reaction is L-tyrosyl-[protein] + ATP = O-(5'-adenylyl)-L-tyrosyl-[protein] + diphosphate. It carries out the reaction L-histidyl-[protein] + UTP = N(tele)-(5'-uridylyl)-L-histidyl-[protein] + diphosphate. It catalyses the reaction L-seryl-[protein] + UTP = O-(5'-uridylyl)-L-seryl-[protein] + diphosphate. The enzyme catalyses L-tyrosyl-[protein] + UTP = O-(5'-uridylyl)-L-tyrosyl-[protein] + diphosphate. Functionally, nucleotidyltransferase involved in the post-translational modification of proteins. It can catalyze the addition of adenosine monophosphate (AMP) or uridine monophosphate (UMP) to a protein, resulting in modifications known as AMPylation and UMPylation. The chain is Protein nucleotidyltransferase YdiU from Clostridium perfringens (strain 13 / Type A).